The following is a 494-amino-acid chain: MSHKYSHPSHSDWEAVIGLEIHVELNTKSKLFSVAPNHFGDEPNTNITEVCTGMPGSLPVLNKEAVRKAVQFGCAIQAEVAKFSKFDRKSYFYPDSPRNFQITQYDQPIVKGGTVIAEVNGKEKSFAVNRVHLEDDAGMLKHFSTFAGVDYNRAGSPLIEIVSEPCIHTPEEAVAYAMAIKAILQYIDASDCNMEEGSLRIDTNISVRLKGEQGLRNKIEIKNMNSFSFMELAIKSEINRQIQAYLSHPTKPHDQIIAQATYRWDPEKQETVLMRRKESADDYRYFPEPDLVPIILTDSYIEEIRQSLPELPLQRERRYTKEMGLSAHQAFALTSDKALADYFEEALKTCSNSRSLSNWLLVEFPGRLKEGGQNVKSINLPPSHIASLINLIEKGTITGKIAKSVADEMVAQPGKDPAEIVAGNPDYQPLNDQNEVERYVDQVLAENNQSIVDYRAGRDKAFAYLVGQVMKLCKGKASPSLVNELLKQKIANLP.

This sequence belongs to the GatB/GatE family. GatB subfamily. As to quaternary structure, heterotrimer of A, B and C subunits.

It carries out the reaction L-glutamyl-tRNA(Gln) + L-glutamine + ATP + H2O = L-glutaminyl-tRNA(Gln) + L-glutamate + ADP + phosphate + H(+). It catalyses the reaction L-aspartyl-tRNA(Asn) + L-glutamine + ATP + H2O = L-asparaginyl-tRNA(Asn) + L-glutamate + ADP + phosphate + 2 H(+). Its function is as follows. Allows the formation of correctly charged Asn-tRNA(Asn) or Gln-tRNA(Gln) through the transamidation of misacylated Asp-tRNA(Asn) or Glu-tRNA(Gln) in organisms which lack either or both of asparaginyl-tRNA or glutaminyl-tRNA synthetases. The reaction takes place in the presence of glutamine and ATP through an activated phospho-Asp-tRNA(Asn) or phospho-Glu-tRNA(Gln). The chain is Aspartyl/glutamyl-tRNA(Asn/Gln) amidotransferase subunit B from Protochlamydia amoebophila (strain UWE25).